The chain runs to 2058 residues: Unconventional myosin-X (2058 aa).

An N-acetylmethionine modification is found at methionine 1. Residues 63 to 739 enclose the Myosin motor domain; it reads EGVDDMASLT…LEQKLEKRRE (677 aa). ATP contacts are provided by residues asparagine 104, tyrosine 113, 160–165, and asparagine 215; that span reads GAGKTE. The tract at residues 619-641 is actin-binding; the sequence is LHSLMATLSSSNPFFVRCIKPNM. 3 IQ domains span residues 742–763, 764–787, and 788–817; these read VSHA…KQYR, KVLY…RFLH, and LKKA…EKRE. Positions 814–883 are SAH; the sequence is EKREQEEKKK…LTRELEKQKE (70 aa). Disordered stretches follow at residues 819 to 840 and 847 to 866; these read EEKK…RERE and ELRA…EALQ. The span at 847–861 shows a compositional bias: basic and acidic residues; sequence ELRAQQEEETRKQQE. Positions 884–934 form a coiled coil; it reads NKQVEEILRLEKEIEDLQRMKEQQELSLTEASLQKLQERRDQELRRLEEEA. Residues serine 962, serine 965, and serine 968 each carry the phosphoserine modification. The disordered stretch occupies residues 964-1090; sequence GSEFSSELAE…DLPSPDGDYD (127 aa). The span at 989–1003 shows a compositional bias: acidic residues; sequence PEEEVDEGFEADDDA. Polar residues predominate over residues 1040–1049; it reads VVPTSPSADS. The segment covering 1060–1071 has biased composition (low complexity); that stretch reads SGSLHNSSSGES. Threonine 1158 carries the post-translational modification Phosphothreonine. PH domains follow at residues 1212–1310 and 1392–1497; these read EALK…QVHA and EFIV…NVTD. The MyTH4 domain maps to 1547-1695; the sequence is LPYGDINLNL…PSRDEIEALI (149 aa). One can recognise an FERM domain in the interval 1700-2044; that stretch reads MTSTVYCHGG…AYISMIVKKR (345 aa).

It belongs to the TRAFAC class myosin-kinesin ATPase superfamily. Myosin family. As to quaternary structure, monomer, when in an inactive conformation in the cytosol. Homodimer in its active, membrane-bound conformation; antiparallel coiled coil-mediated dimer formation. Interacts strongly with CALM3 and weakly with CALM, the CALM3 interaction is essential for function in filopodial extension and motility. Interacts with ECPAS. Interacts with NEO1. Interacts with ITGB1 and ITGB3. Interacts with VASP. Interacts with DCC and ITGB5; the presence of DCC inhibits ITGB5 binding. Interacts with tubulin; ITGB5 or DCC binding inhibits tubulin binding. Post-translationally, the initiator methionine for isoform Headless is removed. Ubiquitous.

Its subcellular location is the cytoplasm. The protein resides in the cytosol. The protein localises to the cell projection. It localises to the lamellipodium. It is found in the ruffle. Its subcellular location is the cytoskeleton. The protein resides in the filopodium tip. The protein localises to the cell cortex. It localises to the filopodium membrane. In terms of biological role, myosins are actin-based motor molecules with ATPase activity. Unconventional myosins serve in intracellular movements. MYO10 binds to actin filaments and actin bundles and functions as a plus end-directed motor. Moves with higher velocity and takes larger steps on actin bundles than on single actin filaments. The tail domain binds to membranous compartments containing phosphatidylinositol 3,4,5-trisphosphate or integrins, and mediates cargo transport along actin filaments. Regulates cell shape, cell spreading and cell adhesion. Stimulates the formation and elongation of filopodia. In hippocampal neurons it induces the formation of dendritic filopodia by trafficking the actin-remodeling protein VASP to the tips of filopodia, where it promotes actin elongation. Plays a role in formation of the podosome belt in osteoclasts. Its function is as follows. Functions as a dominant-negative regulator of isoform 1, suppressing its filopodia-inducing and axon outgrowth-promoting activities. In hippocampal neurons, it increases VASP retention in spine heads to induce spine formation and spine head expansion. In Homo sapiens (Human), this protein is Unconventional myosin-X (MYO10).